The sequence spans 293 residues: Pantothenate synthetase (293 aa).

30 to 37 contacts ATP; that stretch reads MGYLHKGH. H37 (proton donor) is an active-site residue. Q61 contributes to the (R)-pantoate binding site. A beta-alanine-binding site is contributed by Q61. Residue 147-150 participates in ATP binding; sequence GEKD. Q153 is a binding site for (R)-pantoate. ATP is bound by residues V176 and 184–187; that span reads CSSR.

This sequence belongs to the pantothenate synthetase family. As to quaternary structure, homodimer.

Its subcellular location is the cytoplasm. The catalysed reaction is (R)-pantoate + beta-alanine + ATP = (R)-pantothenate + AMP + diphosphate + H(+). The protein operates within cofactor biosynthesis; (R)-pantothenate biosynthesis; (R)-pantothenate from (R)-pantoate and beta-alanine: step 1/1. Functionally, catalyzes the condensation of pantoate with beta-alanine in an ATP-dependent reaction via a pantoyl-adenylate intermediate. In Brucella abortus (strain S19), this protein is Pantothenate synthetase.